The following is a 338-amino-acid chain: RNA 3'-terminal phosphate cyclase (338 aa).

Residues Gln-103 and 283-287 (YLADQ) contribute to the ATP site. Catalysis depends on His-308, which acts as the Tele-AMP-histidine intermediate.

Belongs to the RNA 3'-terminal cyclase family. Type 1 subfamily.

It is found in the cytoplasm. The catalysed reaction is a 3'-end 3'-phospho-ribonucleotide-RNA + ATP = a 3'-end 2',3'-cyclophospho-ribonucleotide-RNA + AMP + diphosphate. Its function is as follows. Catalyzes the conversion of 3'-phosphate to a 2',3'-cyclic phosphodiester at the end of RNA. The mechanism of action of the enzyme occurs in 3 steps: (A) adenylation of the enzyme by ATP; (B) transfer of adenylate to an RNA-N3'P to produce RNA-N3'PP5'A; (C) and attack of the adjacent 2'-hydroxyl on the 3'-phosphorus in the diester linkage to produce the cyclic end product. The biological role of this enzyme is unknown but it is likely to function in some aspects of cellular RNA processing. This chain is RNA 3'-terminal phosphate cyclase, found in Escherichia coli O6:H1 (strain CFT073 / ATCC 700928 / UPEC).